We begin with the raw amino-acid sequence, 447 residues long: GTPase Der (447 aa).

EngA-type G domains are found at residues 4 to 165 and 180 to 357; these read QIIT…PEEE and LQIV…KIWN. Residues 10–17, 57–61, 119–122, 186–193, 233–237, and 298–301 each bind GTP; these read GRPNVGKS, DTPGL, NKCE, GRPNAGKS, DTAGL, and NKWD. The 86-residue stretch at 358–443 folds into the KH-like domain; it reads KKITTSKLNE…PIRFTYVKTK (86 aa).

This sequence belongs to the TRAFAC class TrmE-Era-EngA-EngB-Septin-like GTPase superfamily. EngA (Der) GTPase family. As to quaternary structure, associates with the 50S ribosomal subunit.

In terms of biological role, GTPase that plays an essential role in the late steps of ribosome biogenesis. This Rickettsia rickettsii (strain Iowa) protein is GTPase Der.